The sequence spans 148 residues: Receptor activity-modifying protein 1 (148 aa).

The N-terminal stretch at 1 to 26 (MAPGLRGLPRCGLWLLLAHHLFMVTA) is a signal peptide. 3 disulfide bridges follow: cysteine 27–cysteine 82, cysteine 40–cysteine 72, and cysteine 57–cysteine 104. At 27–118 (CRDPDYGTLI…RALRDPPNSI (92 aa)) the chain is on the extracellular side. A helical membrane pass occupies residues 119–140 (LCPFIALPITVTLLMTALVVWR). Topologically, residues 141–148 (SKRTEGIV) are cytoplasmic.

The protein belongs to the RAMP family. In terms of assembly, heterodimer of CALCRL and RAMP1; the interaction induces allosteric modulation of CALCRL function and CGRP1/CALCA and CGRP2/CALCB ligand specificity. Heterodimer of CALCR and RAMP1; interaction forms the AMYR1 receptor complex for amylin/IAPP and CGRP1/CALCA ligands. In terms of tissue distribution, expressed predominantly in the thymus, skeletal muscle, embryonic and adult brain, embryonic and adult lung, and colon.

The protein resides in the cell membrane. In terms of biological role, accessory protein that interacts with and modulates the function of G-protein coupled receptors including calcitonin gene-related peptide type 1 receptor (CALCRL) and calcitonin receptor (CALCR). Required for the transport of CALCRL to the plasma membrane. Together with CALCRL, form the receptor complex for the calcitonin gene-related peptides CGRP1/CALCA and CGRP2/CALCB. Together with CALCR, form the AMYR1 receptor complex for amylin/IAPP and CGRP1/CALCA. In Mus musculus (Mouse), this protein is Receptor activity-modifying protein 1.